A 360-amino-acid polypeptide reads, in one-letter code: UPF0324 membrane protein DVU_0123 (360 aa).

The next 10 helical transmembrane spans lie at 20 to 42 (VTESLPGLLLVCAVALVASFVAP), 57 to 79 (KDFILAIIFGIIIRNTVGVPAVF), 100 to 122 (SYSLAGLVSVGAQALVFIAVFLF), 142 to 164 (AACLAAGMSVCGVSATIAIAPAV), 171 to 193 (MAYSIAVVLMFGLLALIAFPLIG), 203 to 225 (FGAFAGVGIVNSAQVLAAGFGFS), 232 to 254 (AGIYNIGRVVFLPFVVLMLAIMA), 278 to 297 (FPLFVLGFLAIVCLNTAGVL), 310 to 327 (EWAFLLGFASIGLTTRLS), and 337 to 359 (FLFGFGVAGLKAALALAAVLLFM).

This sequence belongs to the UPF0324 family.

Its subcellular location is the cell membrane. The polypeptide is UPF0324 membrane protein DVU_0123 (Nitratidesulfovibrio vulgaris (strain ATCC 29579 / DSM 644 / CCUG 34227 / NCIMB 8303 / VKM B-1760 / Hildenborough) (Desulfovibrio vulgaris)).